The following is a 461-amino-acid chain: Alpha-L-fucosidase (461 aa).

The N-terminal stretch at 1–18 (MKMIIIFFILLILNLIKS) is a signal peptide.

The protein belongs to the glycosyl hydrolase 29 family.

It catalyses the reaction an alpha-L-fucoside + H2O = L-fucose + an alcohol. Alpha-L-fucosidase is responsible for hydrolyzing the alpha-1,6-linked fucose joined to the reducing-end N-acetylglucosamine of the carbohydrate moieties of glycoproteins. This Dictyostelium discoideum (Social amoeba) protein is Alpha-L-fucosidase (alfA).